A 369-amino-acid chain; its full sequence is Flagellar P-ring protein (369 aa).

An N-terminal signal peptide occupies residues 1–23 (MRIASFFTVLLTLLTLNIAPASA).

It belongs to the FlgI family. As to quaternary structure, the basal body constitutes a major portion of the flagellar organelle and consists of four rings (L,P,S, and M) mounted on a central rod.

It is found in the periplasm. It localises to the bacterial flagellum basal body. Functionally, assembles around the rod to form the L-ring and probably protects the motor/basal body from shearing forces during rotation. In Pectobacterium carotovorum subsp. carotovorum (strain PC1), this protein is Flagellar P-ring protein.